Here is a 195-residue protein sequence, read N- to C-terminus: 3-isopropylmalate dehydratase small subunit (195 aa).

This sequence belongs to the LeuD family. LeuD type 1 subfamily. As to quaternary structure, heterodimer of LeuC and LeuD.

It catalyses the reaction (2R,3S)-3-isopropylmalate = (2S)-2-isopropylmalate. It functions in the pathway amino-acid biosynthesis; L-leucine biosynthesis; L-leucine from 3-methyl-2-oxobutanoate: step 2/4. Catalyzes the isomerization between 2-isopropylmalate and 3-isopropylmalate, via the formation of 2-isopropylmaleate. This chain is 3-isopropylmalate dehydratase small subunit, found in Koribacter versatilis (strain Ellin345).